The chain runs to 269 residues: Formamidopyrimidine-DNA glycosylase (269 aa).

Proline 2 acts as the Schiff-base intermediate with DNA in catalysis. Glutamate 3 acts as the Proton donor in catalysis. Lysine 57 functions as the Proton donor; for beta-elimination activity in the catalytic mechanism. The DNA site is built by histidine 90, arginine 109, and lysine 150. Residues 235 to 269 form an FPG-type zinc finger; it reads QVYGRKGEPCRVCGTPIVATKHAQRATFYCRHCQK. The Proton donor; for delta-elimination activity role is filled by arginine 259.

It belongs to the FPG family. Monomer. The cofactor is Zn(2+).

It carries out the reaction Hydrolysis of DNA containing ring-opened 7-methylguanine residues, releasing 2,6-diamino-4-hydroxy-5-(N-methyl)formamidopyrimidine.. The catalysed reaction is 2'-deoxyribonucleotide-(2'-deoxyribose 5'-phosphate)-2'-deoxyribonucleotide-DNA = a 3'-end 2'-deoxyribonucleotide-(2,3-dehydro-2,3-deoxyribose 5'-phosphate)-DNA + a 5'-end 5'-phospho-2'-deoxyribonucleoside-DNA + H(+). Functionally, involved in base excision repair of DNA damaged by oxidation or by mutagenic agents. Acts as a DNA glycosylase that recognizes and removes damaged bases. Has a preference for oxidized purines, such as 7,8-dihydro-8-oxoguanine (8-oxoG). Has AP (apurinic/apyrimidinic) lyase activity and introduces nicks in the DNA strand. Cleaves the DNA backbone by beta-delta elimination to generate a single-strand break at the site of the removed base with both 3'- and 5'-phosphates. The polypeptide is Formamidopyrimidine-DNA glycosylase (Salmonella heidelberg (strain SL476)).